A 319-amino-acid polypeptide reads, in one-letter code: MKTETPSVKIVAIAADEAGQRIDNFLRTQLKGVPKSMIYRILRKGEVRVNKKRIKPEYKLEAGDEVRIPPVRVAEREEEAVSPHLQKVAALADVILYEDDHILVLNKPSGTAVHGGSGLSFGVIEGLRALRPEARFLELVHRLDRDTSGVLLVAKKRSALRSLHEQLREKGMQKDYLALVRGQWQSHVKTVQAPLLKNILQSGERIVRVSQEGKPSETRFKVEERYAFATLVRCSPVTGRTHQIRVHTQYAGHPIAFDDRYGDREFDQQLTEAGTGLKRLFLHAAALKFTHPGTGEVMRIEAPMDNALKRCLQVLRNAK.

The S4 RNA-binding domain occupies 20 to 83 (QRIDNFLRTQ…AEREEEAVSP (64 aa)). Asp-144 is a catalytic residue.

Belongs to the pseudouridine synthase RluA family.

The catalysed reaction is uridine(955/2504/2580) in 23S rRNA = pseudouridine(955/2504/2580) in 23S rRNA. Responsible for synthesis of pseudouridine from uracil at positions 955, 2504 and 2580 in 23S ribosomal RNA. The polypeptide is Ribosomal large subunit pseudouridine synthase C (rluC) (Salmonella typhimurium (strain LT2 / SGSC1412 / ATCC 700720)).